We begin with the raw amino-acid sequence, 552 residues long: C-type lectin receptor-like tyrosine-protein kinase At1g52310 (552 aa).

An N-terminal signal peptide occupies residues M1–L27. The Extracellular segment spans residues D28–Y201. Residues N37, N59, N69, N106, N118, N137, N154, N169, and N180 are each glycosylated (N-linked (GlcNAc...) asparagine). One can recognise a C-type lectin domain in the interval N59–A188. 2 cysteine pairs are disulfide-bonded: C80-C187 and C164-C179. Residues L202 to W222 traverse the membrane as a helical segment. The Cytoplasmic portion of the chain corresponds to L223–K552. Residues S268 to V546 enclose the Protein kinase domain. ATP-binding positions include A274–T282 and K296. The Proton acceptor role is filled by D394.

This sequence belongs to the protein kinase superfamily. Tyr protein kinase family.

The protein resides in the cell membrane. It carries out the reaction L-tyrosyl-[protein] + ATP = O-phospho-L-tyrosyl-[protein] + ADP + H(+). This Arabidopsis thaliana (Mouse-ear cress) protein is C-type lectin receptor-like tyrosine-protein kinase At1g52310.